The primary structure comprises 141 residues: MRHGNSGRKLNRTASHRKAMFANMAASLITHEQIVTTLPKAKEIRPIVERLVTLGKRGDLHARRQAISQIKDQDAVRKLFDAIASRYATRNGGYLRIMKAGYRQGDNAALAVVEFVERDVDAKGAADKARVAAEAAAAEAA.

This sequence belongs to the bacterial ribosomal protein bL17 family. As to quaternary structure, part of the 50S ribosomal subunit. Contacts protein L32.

The sequence is that of Large ribosomal subunit protein bL17 from Agrobacterium fabrum (strain C58 / ATCC 33970) (Agrobacterium tumefaciens (strain C58)).